A 526-amino-acid polypeptide reads, in one-letter code: Tyrosine-protein kinase transforming protein Src (526 aa).

Residues 1–57 (MGSSKSKPKDPSQRRRSLEPPDSTHHGGFPASQTPNKTAAPDTHRTPSRSFGTVATE) are disordered. Gly2 is lipidated: N-myristoyl glycine; by host. Basic and acidic residues predominate over residues 7 to 25 (KPKDPSQRRRSLEPPDSTH). One can recognise an SH3 domain in the interval 81–142 (GGVTTFVALY…PSNYVAPSDS (62 aa)). Residues 148–245 (WYFGKITRRE…GLCHRLTNVC (98 aa)) form the SH2 domain. The region spanning 267–517 (LRLEVKLGQG…TFEYLQAQLL (251 aa)) is the Protein kinase domain. Residues 273-281 (LGQGCFGEV) and Lys295 contribute to the ATP site. Catalysis depends on Asp386, which acts as the Proton acceptor. At Tyr416 the chain carries Phosphotyrosine; by autocatalysis.

It belongs to the protein kinase superfamily. Tyr protein kinase family. SRC subfamily. As to quaternary structure, homodimer. Post-translationally, the phosphorylated form is termed pp60v-src.

It catalyses the reaction L-tyrosyl-[protein] + ATP = O-phospho-L-tyrosyl-[protein] + ADP + H(+). Functionally, this phosphoprotein, required for both the initiation and the maintenance of neoplastic transformation, is a protein kinase that catalyzes the phosphorylation of tyrosine residues in vitro. Causes mitotic slippage in addition to cytokinesis failure in the host cell. Phosphorylates and attenuates the activity of host CDK1, possibly causing the mitotic slippage. The sequence is that of Tyrosine-protein kinase transforming protein Src (V-SRC) from Rous sarcoma virus subgroup A (strain Schmidt-Ruppin) (RSV-SR-A).